The primary structure comprises 124 residues: uncharacterized protein (124 aa).

The first 22 residues, 1-22 (MGTSSVLLMIASSLILLEVVMT), serve as a signal peptide directing secretion.

This is an uncharacterized protein from Caenorhabditis elegans.